The primary structure comprises 80 residues: Conotoxin Ca11.3 (80 aa).

The first 19 residues, 1–19 (MKLVLAIVVILMLLSLSTG), serve as a signal peptide directing secretion. Positions 20-42 (AEMSDNHASRSATALRDRLLSPK) are excised as a propeptide. Intrachain disulfides connect Cys46–Cys60, Cys53–Cys65, Cys59–Cys72, and Cys64–Cys79.

Belongs to the conotoxin I3 superfamily. Expressed by the venom duct.

It is found in the secreted. This is Conotoxin Ca11.3 from Conus caracteristicus (Characteristic cone).